The sequence spans 418 residues: Tryptophan synthase beta chain (418 aa).

Positions 1–17 are enriched in polar residues; that stretch reads MTSTLPNASTPDPSSLQ. Residues 1–23 form a disordered region; that stretch reads MTSTLPNASTPDPSSLQPAVRPG. The residue at position 111 (Lys111) is an N6-(pyridoxal phosphate)lysine.

The protein belongs to the TrpB family. Tetramer of two alpha and two beta chains. Pyridoxal 5'-phosphate serves as cofactor.

It carries out the reaction (1S,2R)-1-C-(indol-3-yl)glycerol 3-phosphate + L-serine = D-glyceraldehyde 3-phosphate + L-tryptophan + H2O. The protein operates within amino-acid biosynthesis; L-tryptophan biosynthesis; L-tryptophan from chorismate: step 5/5. The beta subunit is responsible for the synthesis of L-tryptophan from indole and L-serine. This chain is Tryptophan synthase beta chain, found in Synechococcus sp. (strain CC9605).